A 313-amino-acid polypeptide reads, in one-letter code: Formimidoylglutamase (313 aa).

Mn(2+)-binding residues include His-130, Asp-155, His-157, Asp-159, Asp-241, and Asp-243.

This sequence belongs to the arginase family. It depends on Mn(2+) as a cofactor.

The catalysed reaction is N-formimidoyl-L-glutamate + H2O = formamide + L-glutamate. The protein operates within amino-acid degradation; L-histidine degradation into L-glutamate; L-glutamate from N-formimidoyl-L-glutamate (hydrolase route): step 1/1. Its function is as follows. Catalyzes the conversion of N-formimidoyl-L-glutamate to L-glutamate and formamide. This chain is Formimidoylglutamase, found in Salmonella agona (strain SL483).